A 166-amino-acid polypeptide reads, in one-letter code: Bile acid 7alpha-dehydratase (166 aa).

Homodimer.

It catalyses the reaction 7alpha,12alpha-dihydroxy-3-oxochol-4-en-24-oyl-CoA = 12alpha-hydroxy-3-oxochola-4,6-dien-24-oyl-CoA + H2O. The enzyme catalyses 7alpha-hydroxy-3-oxochol-4-en-24-oyl-CoA = 3-oxochol-4,6-dien-24-oyl-CoA + H2O. The catalysed reaction is 7alpha,12alpha-dihydroxy-3-oxochol-4-en-24-oate = 12alpha-hydroxy-3-oxochola-4,6-dien-24-oate + H2O. It carries out the reaction 7alpha-hydroxy-3-oxochol-4-en-24-oate = 3-oxochola-4,6-dien-24-oate + H2O. It functions in the pathway lipid metabolism; bile acid biosynthesis. Its function is as follows. Functions in the bile acid 7alpha-dehydroxylation pathway, which forms secondary bile acids via the 7alpha-dehydroxylation of primary bile acids, and is carried out by intestinal anaerobic bacteria. Catalyzes the dehydration step in this pathway, yielding a 3-oxo-Delta(4,6)-bile acid-CoA intermediate. In vitro, can act on the free bile acids (non CoA-conjugated) 7-alpha,12-alpha-dihydroxy-3-oxochol-4-enoate and 7-alpha-hydroxy-3-oxochol-4-enoate, but not on 7-alpha,12-alpha-dihydroxy-3-oxo-5-beta-cholanate, 3-alpha,7-alpha,12-alpha-trihydroxy-5-beta-cholanate or 7-beta-hydroxy-3-oxochol-4-enoate. This is Bile acid 7alpha-dehydratase from Clostridium scindens (strain JCM 10418 / VPI 12708).